The sequence spans 274 residues: Rhamnulose-1-phosphate aldolase (274 aa).

Glutamate 117 is an active-site residue. 3 residues coordinate Zn(2+): histidine 141, histidine 143, and histidine 212.

Belongs to the aldolase class II family. RhaD subfamily. Homotetramer. Zn(2+) serves as cofactor.

The protein resides in the cytoplasm. It catalyses the reaction L-rhamnulose 1-phosphate = (S)-lactaldehyde + dihydroxyacetone phosphate. Its pathway is carbohydrate degradation; L-rhamnose degradation; glycerone phosphate from L-rhamnose: step 3/3. Catalyzes the reversible cleavage of L-rhamnulose-1-phosphate to dihydroxyacetone phosphate (DHAP) and L-lactaldehyde. The sequence is that of Rhamnulose-1-phosphate aldolase from Escherichia coli (strain K12 / MC4100 / BW2952).